A 189-amino-acid chain; its full sequence is Peptidyl-tRNA hydrolase (189 aa).

Residue Tyr15 coordinates tRNA. The active-site Proton acceptor is the His20. Positions 66, 68, and 114 each coordinate tRNA.

The protein belongs to the PTH family. In terms of assembly, monomer.

It localises to the cytoplasm. It catalyses the reaction an N-acyl-L-alpha-aminoacyl-tRNA + H2O = an N-acyl-L-amino acid + a tRNA + H(+). Functionally, hydrolyzes ribosome-free peptidyl-tRNAs (with 1 or more amino acids incorporated), which drop off the ribosome during protein synthesis, or as a result of ribosome stalling. In terms of biological role, catalyzes the release of premature peptidyl moieties from peptidyl-tRNA molecules trapped in stalled 50S ribosomal subunits, and thus maintains levels of free tRNAs and 50S ribosomes. This chain is Peptidyl-tRNA hydrolase, found in Streptococcus pyogenes serotype M1.